We begin with the raw amino-acid sequence, 138 residues long: Small ribosomal subunit protein uS11c (138 aa).

The tract at residues 1–22 is disordered; that stretch reads MAKSIPRISSRRNGPIGSGKTV.

The protein belongs to the universal ribosomal protein uS11 family. As to quaternary structure, part of the 30S ribosomal subunit.

It localises to the plastid. The protein is Small ribosomal subunit protein uS11c of Cuscuta exaltata (Tall dodder).